A 314-amino-acid chain; its full sequence is DegV domain-containing protein XCC3382 (314 aa).

In terms of domain architecture, DegV spans 3-307 (IGIVVDSACD…KGALAVAFAA (305 aa)). Hexadecanoate is bound by residues T63 and S96.

In terms of biological role, may bind long-chain fatty acids, such as palmitate, and may play a role in lipid transport or fatty acid metabolism. This Xanthomonas campestris pv. campestris (strain ATCC 33913 / DSM 3586 / NCPPB 528 / LMG 568 / P 25) protein is DegV domain-containing protein XCC3382.